Here is a 169-residue protein sequence, read N- to C-terminus: Disulfide bond formation protein B 1 (169 aa).

The Cytoplasmic portion of the chain corresponds to 1–14 (MSDNTLYLRREKRF). The chain crosses the membrane as a helical span at residues 15-31 (LVLLGIICLALIGGALY). Topologically, residues 32–49 (MQIVLGEAPCPLCILQRY) are periplasmic. An intrachain disulfide couples Cys-41 to Cys-44. A helical membrane pass occupies residues 50–64 (ALLFIAIFAFIGAAM). Residues 65 to 71 (SGRRGVT) are Cytoplasmic-facing. Residues 72-89 (VCETLVTLSALGGIAAAG) form a helical membrane-spanning segment. Residues 90–144 (RHVWILAHPSDSCGIDVLQPIVDGLPLATLFPTGFQVSGFCTTPYPPVLGLSLAQ) are Periplasmic-facing. A disulfide bond links Cys-102 and Cys-130. The chain crosses the membrane as a helical span at residues 145–163 (WALAAFVLTAVLVPACIIR). The Cytoplasmic portion of the chain corresponds to 164–169 (NRRKPY).

It belongs to the DsbB family.

Its subcellular location is the cell inner membrane. Its function is as follows. Required for disulfide bond formation in some periplasmic proteins. Acts by oxidizing the DsbA protein. The chain is Disulfide bond formation protein B 1 from Pseudomonas savastanoi pv. phaseolicola (strain 1448A / Race 6) (Pseudomonas syringae pv. phaseolicola (strain 1448A / Race 6)).